The primary structure comprises 342 residues: tRNA-specific 2-thiouridylase MnmA (342 aa).

ATP-binding positions include 6-13 (GMSGGVDS) and Leu-32. The Nucleophile role is filled by Cys-99. The cysteines at positions 99 and 190 are disulfide-linked. Gly-124 is a binding site for ATP. The interval 140 to 142 (KDQ) is interaction with tRNA. Cys-190 serves as the catalytic Cysteine persulfide intermediate. The segment at 292 to 293 (RY) is interaction with tRNA.

The protein belongs to the MnmA/TRMU family.

The protein resides in the cytoplasm. It catalyses the reaction S-sulfanyl-L-cysteinyl-[protein] + uridine(34) in tRNA + AH2 + ATP = 2-thiouridine(34) in tRNA + L-cysteinyl-[protein] + A + AMP + diphosphate + H(+). In terms of biological role, catalyzes the 2-thiolation of uridine at the wobble position (U34) of tRNA, leading to the formation of s(2)U34. This Hydrogenobaculum sp. (strain Y04AAS1) protein is tRNA-specific 2-thiouridylase MnmA.